A 335-amino-acid polypeptide reads, in one-letter code: Olfactory receptor 52B6 (335 aa).

The Extracellular segment spans residues M1–I45. N23 carries an N-linked (GlcNAc...) asparagine glycan. The chain crosses the membrane as a helical span at residues W46 to I66. Residues C67–I74 lie on the Cytoplasmic side of the membrane. A helical membrane pass occupies residues L75 to T95. At T96–T119 the chain is on the extracellular side. A disulfide bridge connects residues C117 and C208. The chain crosses the membrane as a helical span at residues Q120–F139. Topologically, residues D140–K158 are cytoplasmic. Residues V159–I179 traverse the membrane as a helical segment. The Extracellular segment spans residues F180–V215. A helical transmembrane segment spans residues W216–S236. Residues Y237 to A256 are Cytoplasmic-facing. The chain crosses the membrane as a helical span at residues L257–S277. The Extracellular segment spans residues V278 to H293. The helical transmembrane segment at I294–V314 threads the bilayer. Residues R315–K335 are Cytoplasmic-facing.

This sequence belongs to the G-protein coupled receptor 1 family.

Its subcellular location is the cell membrane. In terms of biological role, odorant receptor. This chain is Olfactory receptor 52B6 (OR52B6), found in Homo sapiens (Human).